Here is a 182-residue protein sequence, read N- to C-terminus: Oligoribonuclease (182 aa).

Positions 8–171 (LIWLDMEMTG…ADIHESIGEL (164 aa)) constitute an Exonuclease domain. The active site involves Tyr-129.

This sequence belongs to the oligoribonuclease family.

It localises to the cytoplasm. 3'-to-5' exoribonuclease specific for small oligoribonucleotides. This is Oligoribonuclease from Azoarcus sp. (strain BH72).